We begin with the raw amino-acid sequence, 378 residues long: MAKRDYYEVLGVSKSASKDEIKKAYRKLSKQYHPDINKEEGADEKFKEISEAYEVLSDENKRANYDQFGHDGPQGGFGGQGFGGQDFSGFGGGGFEDIFSSFFGGGRQQRDPNAPRKGDDLQYTMTVTFDEAVFGSEKEISIRKDVACHTCDGEGAKPGTKKKTCHYCNGSGHVSVEQNTILGRVRTEKVCPVCSGSGQEFEEPCPTCHGKGTENKNVKISVTIPEGVDNEQQIRLAGEGAPGENGGPQGDLYIVFRVKPSEKFERDGDDIYYSLDISIAQATLGDEVKVPTLKGSVMLTIPAGTQTEKQFRLKEKGIKNVHGYGYGDLFININVVTPTKISDRQKELLREFAEIDGEELSEQPSNFRDKAKRFFKGE.

The J domain occupies D5–G69. Residues G135–N217 form a CR-type zinc finger. Zn(2+)-binding residues include C148, C151, C165, C168, C191, C194, C205, and C208. CXXCXGXG motif repeat units follow at residues C148–G155, C165–G172, C191–G198, and C205–G212.

It belongs to the DnaJ family. Homodimer. Zn(2+) serves as cofactor.

The protein resides in the cytoplasm. Its function is as follows. Participates actively in the response to hyperosmotic and heat shock by preventing the aggregation of stress-denatured proteins and by disaggregating proteins, also in an autonomous, DnaK-independent fashion. Unfolded proteins bind initially to DnaJ; upon interaction with the DnaJ-bound protein, DnaK hydrolyzes its bound ATP, resulting in the formation of a stable complex. GrpE releases ADP from DnaK; ATP binding to DnaK triggers the release of the substrate protein, thus completing the reaction cycle. Several rounds of ATP-dependent interactions between DnaJ, DnaK and GrpE are required for fully efficient folding. Also involved, together with DnaK and GrpE, in the DNA replication of plasmids through activation of initiation proteins. The sequence is that of Chaperone protein DnaJ from Staphylococcus saprophyticus subsp. saprophyticus (strain ATCC 15305 / DSM 20229 / NCIMB 8711 / NCTC 7292 / S-41).